The following is a 106-amino-acid chain: Foxo1-corepressor (106 aa).

Positions Met1–Asp44 are disordered. A Nuclear export signal motif is present at residues Ile78–Leu87. A Phosphothreonine; by PKA modification is found at Thr93.

Interacts with FOXO1 (via N-terminal domain); the interaction is direct, occurs in a forskolin-independent manner that prevents SIRT1 binding to FOXO1. Interacts with FOXO3. Does not interact with FOXO4. Post-translationally, phosphorylated at Thr-93 by PKA, leading to import into the nucleus. In terms of tissue distribution, expressed in adipocytes. Expressed in brown and white adipose tissue but not in liver. Protein levels in brown and white adipose tissues decrease following fasting (at protein level). Expressed in white and brown adipose tissues. Expressed in adipocytes. Not expressed in liver, skeletal muscle and brain.

The protein localises to the cytoplasm. It localises to the cytosol. Its subcellular location is the nucleus. In terms of biological role, regulator of adipocytes that acts by repressing FOXO1 transcriptional activity. Acts by promoting acetylation of FOXO1, both by preventing the interaction between FOXO1 and SIRT1 deacetylase, and by mediating acetyltransferase activity in vitro. Regulates insulin sensitivity and energy metabolism. This chain is Foxo1-corepressor (Fcor), found in Mus musculus (Mouse).